Reading from the N-terminus, the 298-residue chain is GTPase Era (298 aa).

Residues 3 to 170 (KSGFVAILGR…VQLLKDNLEE (168 aa)) form the Era-type G domain. The tract at residues 11-18 (GRPNVGKS) is G1. 11–18 (GRPNVGKS) is a GTP binding site. Residues 37 to 41 (QTTRN) form a G2 region. The interval 58–61 (DTPG) is G3. Residues 58-62 (DTPGI) and 120-123 (NKID) contribute to the GTP site. Residues 120–123 (NKID) form a G4 region. The interval 149-151 (ISA) is G5. The KH type-2 domain maps to 201–279 (TQQEVPHSVA…YLETWVKVKK (79 aa)).

Belongs to the TRAFAC class TrmE-Era-EngA-EngB-Septin-like GTPase superfamily. Era GTPase family. Monomer.

It is found in the cytoplasm. The protein resides in the cell membrane. In terms of biological role, an essential GTPase that binds both GDP and GTP, with rapid nucleotide exchange. Plays a role in 16S rRNA processing and 30S ribosomal subunit biogenesis and possibly also in cell cycle regulation and energy metabolism. This is GTPase Era from Streptococcus equi subsp. equi (strain 4047).